A 238-amino-acid polypeptide reads, in one-letter code: Ribonuclease PH (238 aa).

Phosphate is bound by residues R86 and 124–126 (GTR).

This sequence belongs to the RNase PH family. As to quaternary structure, homohexameric ring arranged as a trimer of dimers.

It catalyses the reaction tRNA(n+1) + phosphate = tRNA(n) + a ribonucleoside 5'-diphosphate. Functionally, phosphorolytic 3'-5' exoribonuclease that plays an important role in tRNA 3'-end maturation. Removes nucleotide residues following the 3'-CCA terminus of tRNAs; can also add nucleotides to the ends of RNA molecules by using nucleoside diphosphates as substrates, but this may not be physiologically important. Probably plays a role in initiation of 16S rRNA degradation (leading to ribosome degradation) during starvation. The sequence is that of Ribonuclease PH from Enterobacter sp. (strain 638).